The sequence spans 104 residues: Cell division topological specificity factor (104 aa).

Belongs to the MinE family.

Functionally, prevents the cell division inhibition by proteins MinC and MinD at internal division sites while permitting inhibition at polar sites. This ensures cell division at the proper site by restricting the formation of a division septum at the midpoint of the long axis of the cell. The chain is Cell division topological specificity factor from Sorangium cellulosum (strain So ce56) (Polyangium cellulosum (strain So ce56)).